The following is a 1167-amino-acid chain: Nucleolar protein 8 (1167 aa).

One can recognise an RRM domain in the interval 8-89; the sequence is KRLYVGGLSQ…GTLQIQLAKE (82 aa). A disordered region spans residues 223-304; the sequence is VQKDESSTGS…NSISDDDTDS (82 aa). Lys-225 is covalently cross-linked (Glycyl lysine isopeptide (Lys-Gly) (interchain with G-Cter in SUMO2)). Residues 248–275 show a composition bias toward polar residues; that stretch reads LTQQQAAQKRTCDSITPSKSSPVPVSDT. Phosphoserine is present on residues Ser-268 and Ser-298. The residue at position 302 (Thr-302) is a Phosphothreonine. Ser-304 is modified (phosphoserine). Lys-314 is covalently cross-linked (Glycyl lysine isopeptide (Lys-Gly) (interchain with G-Cter in SUMO2)). Residues Ser-331 and Ser-365 each carry the phosphoserine modification. Tyr-376 carries the phosphotyrosine modification. Ser-378 carries the phosphoserine modification. Thr-381 carries the post-translational modification Phosphothreonine. The residue at position 432 (Ser-432) is a Phosphoserine. Disordered regions lie at residues 435–470, 499–533, 590–908, 932–982, and 1006–1026; these read ESAL…DSEG, LKVP…TGLR, KDSV…EEEL, NRGS…AEKL, and YTSE…EKPE. Residues 457–470 show a composition bias toward acidic residues; sequence EDADSASELADSEG. Over residues 501–510 the composition is skewed to basic and acidic residues; the sequence is VPNEDTKSDG. Positions 640-652 are enriched in polar residues; the sequence is NYIQPQKRQTTFE. Basic and acidic residues predominate over residues 653 to 668; sequence SQDRKAVSPSSSEKRS. A Phosphoserine modification is found at Ser-723. The segment covering 727–736 has biased composition (basic and acidic residues); it reads SSKDTREIKT. Over residues 738 to 748 the composition is skewed to polar residues; the sequence is FSLSISNSSDV. Basic and acidic residues predominate over residues 749-776; sequence SAKDKHAEDNEKRLAALEARQKAKEVQK. Residues 753-779 adopt a coiled-coil conformation; sequence KHAEDNEKRLAALEARQKAKEVQKKLV. Thr-795 bears the Phosphothreonine mark. At Ser-801 the chain carries Phosphoserine. Positions 817–827 are enriched in basic and acidic residues; the sequence is HPGEEWVKESM. Residues Ser-837, Ser-838, Ser-843, and Ser-845 each carry the phosphoserine modification. A compositionally biased stretch (acidic residues) spans 837–847; it reads SSDDDESDSED. The segment covering 874-887 has biased composition (basic and acidic residues); sequence GTDDRFRMDSRFLE. Residues 886 to 924 are a coiled coil; sequence LETDSEEEQEEVNEKKTAEEEELAEEKKKALNVVQSVLQ. Thr-888 bears the Phosphothreonine mark. Residue Ser-890 is modified to Phosphoserine. Composition is skewed to basic and acidic residues over residues 940 to 968 and 1007 to 1026; these read KFKD…PKES and TSEK…EKPE. Ser-1036 bears the Phosphoserine mark. Lys-1057 is covalently cross-linked (Glycyl lysine isopeptide (Lys-Gly) (interchain with G-Cter in SUMO2)). Disordered stretches follow at residues 1071-1105 and 1145-1167; these read IVWQ…EASL and RTTN…MKPK. Phosphoserine is present on residues Ser-1082, Ser-1083, Ser-1084, and Ser-1099. Over residues 1153–1167 the composition is skewed to basic residues; that stretch reads CRKKHKDAKRKMKPK.

Interacts with the GTP form of RRAGA, RRAGC and RRAGD. Interacts with NIP7. Interacts with DDX18; the interaction is RNA-dependent. Interacts with DDX47; the interaction is RNA-dependent. Post-translationally, phosphorylated. In terms of tissue distribution, expressed in various diffuse-type gastric cancers. Detected at lower levels in skeletal muscle.

Its subcellular location is the nucleus. It is found in the nucleolus. Its function is as follows. Plays an essential role in the survival of diffuse-type gastric cancer cells. Acts as a nucleolar anchoring protein for DDX47. May be involved in regulation of gene expression at the post-transcriptional level or in ribosome biogenesis in cancer cells. The protein is Nucleolar protein 8 of Homo sapiens (Human).